Here is a 343-residue protein sequence, read N- to C-terminus: CRISPR-associated endonuclease Cas1 1 (343 aa).

The Mn(2+) site is built by Glu166, His234, and Glu249.

The protein belongs to the CRISPR-associated endonuclease Cas1 family. In terms of assembly, homodimer, forms a heterotetramer with a Cas2 homodimer. Mg(2+) serves as cofactor. It depends on Mn(2+) as a cofactor.

Its function is as follows. CRISPR (clustered regularly interspaced short palindromic repeat), is an adaptive immune system that provides protection against mobile genetic elements (viruses, transposable elements and conjugative plasmids). CRISPR clusters contain spacers, sequences complementary to antecedent mobile elements, and target invading nucleic acids. CRISPR clusters are transcribed and processed into CRISPR RNA (crRNA). Acts as a dsDNA endonuclease. Involved in the integration of spacer DNA into the CRISPR cassette. This Moorella thermoacetica (strain ATCC 39073 / JCM 9320) protein is CRISPR-associated endonuclease Cas1 1.